We begin with the raw amino-acid sequence, 215 residues long: MKRSRKFSSSTTTTTVIHTFYNDHTTPPATKEIPIETPLPATKANVKTNATAAAARIQSGYRSYRIRNLYKKISSINREANRVQSIIQRQETVDAIRSDEKERLRMNETLMALLLKLDSVPGLDPTIREARRKVSRKIVGMQEILDSISETKDEIQWWNYNDLGGVDSGQGGGAWPLYWEEAVEEEMCRERGGEEMERFCAQYLGFRCFQRFLRE.

Residues 1-14 constitute a mitochondrion transit peptide; that stretch reads MKRSRKFSSSTTTT. The region spanning 50–79 is the IQ domain; it reads ATAAAARIQSGYRSYRIRNLYKKISSINRE. Residues 72 to 149 enclose the BAG domain; it reads KISSINREAN…GMQEILDSIS (78 aa).

As to quaternary structure, binds to the ATPase domain of HSP70/HSC70 chaperones. Interacts with HSP70-1.

The protein localises to the mitochondrion. Its function is as follows. Co-chaperone that regulates diverse cellular pathways, such as programmed cell death and stress responses. This chain is BAG family molecular chaperone regulator 5, mitochondrial (BAG5), found in Arabidopsis thaliana (Mouse-ear cress).